A 341-amino-acid polypeptide reads, in one-letter code: UDP-3-O-(3-hydroxymyristoyl)glucosamine N-acyltransferase (341 aa).

The active-site Proton acceptor is histidine 239.

The protein belongs to the transferase hexapeptide repeat family. LpxD subfamily. In terms of assembly, homotrimer.

The enzyme catalyses a UDP-3-O-[(3R)-3-hydroxyacyl]-alpha-D-glucosamine + a (3R)-hydroxyacyl-[ACP] = a UDP-2-N,3-O-bis[(3R)-3-hydroxyacyl]-alpha-D-glucosamine + holo-[ACP] + H(+). It catalyses the reaction UDP-3-O-[(3R)-3-hydroxytetradecanoyl]-alpha-D-glucosamine + (3R)-hydroxytetradecanoyl-[ACP] = UDP-2-N,3-O-bis[(3R)-3-hydroxytetradecanoyl]-alpha-D-glucosamine + holo-[ACP] + H(+). It participates in glycolipid biosynthesis; lipid IV(A) biosynthesis; lipid IV(A) from (3R)-3-hydroxytetradecanoyl-[acyl-carrier-protein] and UDP-N-acetyl-alpha-D-glucosamine: step 3/6. Functionally, catalyzes the N-acylation of UDP-3-O-(hydroxytetradecanoyl)glucosamine using 3-hydroxytetradecanoyl-ACP as the acyl donor. Is involved in the biosynthesis of lipid A, a phosphorylated glycolipid that anchors the lipopolysaccharide to the outer membrane of the cell. This chain is UDP-3-O-(3-hydroxymyristoyl)glucosamine N-acyltransferase, found in Salmonella paratyphi A (strain ATCC 9150 / SARB42).